We begin with the raw amino-acid sequence, 115 residues long: MSRVKRGNVARKRRKKVLKLAKGFRGSHSRLFRTANQQVMKALRNAYRDRRKRKRDFRRLWITRINAAARQQGISYSQLTGQLKKANILLNRKMLAQLAVLDPVAFAKVVETAKG.

It belongs to the bacterial ribosomal protein bL20 family.

In terms of biological role, binds directly to 23S ribosomal RNA and is necessary for the in vitro assembly process of the 50S ribosomal subunit. It is not involved in the protein synthesizing functions of that subunit. This Microcystis aeruginosa (strain NIES-843 / IAM M-2473) protein is Large ribosomal subunit protein bL20.